The following is a 205-amino-acid chain: Holliday junction branch migration complex subunit RuvA (205 aa).

The segment at 1 to 64 is domain I; it reads MIGKLRGLID…EDQIKLFGFR (64 aa). The tract at residues 65 to 143 is domain II; sequence SDVEREWFRL…AFANVDPGVV (79 aa). The interval 144–154 is flexible linker; that stretch reads RLSGAIEESRA. The interval 154-205 is domain III; sequence APQPVADAISALINLGYGQPQAAAAIAAASRAAGDKAETAQLIRLGLKELAK.

It belongs to the RuvA family. As to quaternary structure, homotetramer. Forms an RuvA(8)-RuvB(12)-Holliday junction (HJ) complex. HJ DNA is sandwiched between 2 RuvA tetramers; dsDNA enters through RuvA and exits via RuvB. An RuvB hexamer assembles on each DNA strand where it exits the tetramer. Each RuvB hexamer is contacted by two RuvA subunits (via domain III) on 2 adjacent RuvB subunits; this complex drives branch migration. In the full resolvosome a probable DNA-RuvA(4)-RuvB(12)-RuvC(2) complex forms which resolves the HJ.

It localises to the cytoplasm. Functionally, the RuvA-RuvB-RuvC complex processes Holliday junction (HJ) DNA during genetic recombination and DNA repair, while the RuvA-RuvB complex plays an important role in the rescue of blocked DNA replication forks via replication fork reversal (RFR). RuvA specifically binds to HJ cruciform DNA, conferring on it an open structure. The RuvB hexamer acts as an ATP-dependent pump, pulling dsDNA into and through the RuvAB complex. HJ branch migration allows RuvC to scan DNA until it finds its consensus sequence, where it cleaves and resolves the cruciform DNA. The protein is Holliday junction branch migration complex subunit RuvA of Bradyrhizobium sp. (strain ORS 278).